The sequence spans 308 residues: MMMMTSLGGGAGGGGGGGGSGGGRFVTYPPPLSVPPSAPQSPNFSGGLRSQPSFLVEQEKYLSELLAERHKLTPFLPVLPHVCRLMNQEILRVTTLLENALSQSRFDHPSPLASGGIFQNSRADMNGWASQFPSERSVSSSPAPNWLNSPGSSSGLIVKRTIRVDIPVDKYPNYNFVGRLLGPRGNSLKRVEASTDCRVLIRGRGSIKDPIKEDMMRGKPGYEHLNEPLHILVEAELPIEIVDARLMQAREILDDLLTPVEETHDFYKKQQLRELALLNGSLREEGSPMSGSISPYNSLGMKRAKTRG.

Positions 1–26 (MMMMTSLGGGAGGGGGGGGSGGGRFV) are disordered. A compositionally biased stretch (gly residues) spans 7 to 24 (LGGGAGGGGGGGGSGGGR). Residues 165–232 (DIPVDKYPNY…EHLNEPLHIL (68 aa)) enclose the KH domain. Residues 284–308 (EEGSPMSGSISPYNSLGMKRAKTRG) are disordered. At Ser-294 the chain carries Phosphoserine.

It localises to the nucleus. This Arabidopsis thaliana (Mouse-ear cress) protein is KH domain-containing protein At4g26480.